Reading from the N-terminus, the 549-residue chain is Zinc finger protein 382 (549 aa).

The tract at residues 1–105 (MNCHSVPLQG…DKPPTSIVII (105 aa)) is mediates interaction with TRIM28. Represses transcription regions lie at residues 10 to 51 (GPVS…FISV) and 75 to 210 (MFPS…PEQR). Residues 12–83 (VSFKDVTVDF…RMFPSQSYLE (72 aa)) form the KRAB domain. 10 C2H2-type zinc fingers span residues 211–233 (FECD…DRAH), 295–317 (FQCP…QRIH), 323–345 (YICS…EKTH), 351–373 (YLCV…HKTH), 379–401 (YECT…QRTH), 407–429 (YQCA…QRTH), 435–457 (YMCS…QRIH), 463–485 (YVCS…YRIH), 491–513 (NGCP…QKTH), and 519–541 (YECH…QKTH). The segment at 295-549 (FQCPYCGNSF…THKAETVRFQ (255 aa)) is required for transcriptional repression activity; probably mediates sequence-specific DNA-binding.

It belongs to the krueppel C2H2-type zinc-finger protein family. As to quaternary structure, interacts with TRIM28; enhances the transcriptional repressor activity. As to expression, ubiquitously expressed with higher expression in lung, kidney and testis.

It localises to the nucleus. In terms of biological role, functions as a sequence-specific transcriptional repressor. In Rattus norvegicus (Rat), this protein is Zinc finger protein 382 (Znf382).